Reading from the N-terminus, the 330-residue chain is DNA-directed RNA polymerase subunit alpha (330 aa).

Residues 1-231 are alpha N-terminal domain (alpha-NTD); the sequence is MAILAFQKPD…IYHFMLFSDE (231 aa). The tract at residues 253–330 is alpha C-terminal domain (alpha-CTD); the sequence is MRQLLKTKLV…DISKYKLDKE (78 aa).

This sequence belongs to the RNA polymerase alpha chain family. Homodimer. The RNAP catalytic core consists of 2 alpha, 1 beta, 1 beta' and 1 omega subunit. When a sigma factor is associated with the core the holoenzyme is formed, which can initiate transcription.

The catalysed reaction is RNA(n) + a ribonucleoside 5'-triphosphate = RNA(n+1) + diphosphate. DNA-dependent RNA polymerase catalyzes the transcription of DNA into RNA using the four ribonucleoside triphosphates as substrates. The protein is DNA-directed RNA polymerase subunit alpha of Phocaeicola vulgatus (strain ATCC 8482 / DSM 1447 / JCM 5826 / CCUG 4940 / NBRC 14291 / NCTC 11154) (Bacteroides vulgatus).